The chain runs to 211 residues: Transcriptional regulator NarO (211 aa).

One can recognise an HTH bat-type domain in the interval 154–205 (LTARQREVLETAHEMGYFEHPREANATEVAAALDINRSTFTEHLSAAQSKLL).

In terms of biological role, activates transcription of the denitrifying genes (nitrate reductase narA and nitrite reductase nirK) under anaerobic conditions. This is Transcriptional regulator NarO from Haloferax volcanii (strain ATCC 29605 / DSM 3757 / JCM 8879 / NBRC 14742 / NCIMB 2012 / VKM B-1768 / DS2) (Halobacterium volcanii).